A 251-amino-acid polypeptide reads, in one-letter code: Hydroxyacylglutathione hydrolase (251 aa).

Positions 55, 57, 59, 60, 112, 131, and 169 each coordinate Zn(2+).

Belongs to the metallo-beta-lactamase superfamily. Glyoxalase II family. As to quaternary structure, monomer. Zn(2+) is required as a cofactor.

It catalyses the reaction an S-(2-hydroxyacyl)glutathione + H2O = a 2-hydroxy carboxylate + glutathione + H(+). It functions in the pathway secondary metabolite metabolism; methylglyoxal degradation; (R)-lactate from methylglyoxal: step 2/2. Functionally, thiolesterase that catalyzes the hydrolysis of S-D-lactoyl-glutathione to form glutathione and D-lactic acid. The chain is Hydroxyacylglutathione hydrolase from Erythrobacter litoralis (strain HTCC2594).